We begin with the raw amino-acid sequence, 456 residues long: uncharacterized protein (456 aa).

Residues 3–61 (TIKKNEVKTGKVIDLTHEGHGVVKVDRYPIFIPNALIDEEIKFKLIKVKKNFAIGKLIE) enclose the TRAM domain. 4 residues coordinate [4Fe-4S] cluster: cysteine 74, cysteine 80, cysteine 83, and cysteine 162. S-adenosyl-L-methionine is bound by residues glutamine 286, tyrosine 315, glutamate 336, and aspartate 384. Cysteine 411 acts as the Nucleophile in catalysis.

Belongs to the class I-like SAM-binding methyltransferase superfamily. RNA M5U methyltransferase family.

This is an uncharacterized protein from Staphylococcus epidermidis (strain ATCC 12228 / FDA PCI 1200).